The primary structure comprises 135 residues: uncharacterized protein (135 aa).

This is an uncharacterized protein from Methanocaldococcus jannaschii (strain ATCC 43067 / DSM 2661 / JAL-1 / JCM 10045 / NBRC 100440) (Methanococcus jannaschii).